Here is a 249-residue protein sequence, read N- to C-terminus: tRNA (guanine-N(1)-)-methyltransferase (249 aa).

Residues Gly-113 and 133-138 contribute to the S-adenosyl-L-methionine site; that span reads VGDYVL.

This sequence belongs to the RNA methyltransferase TrmD family. Homodimer.

It localises to the cytoplasm. It catalyses the reaction guanosine(37) in tRNA + S-adenosyl-L-methionine = N(1)-methylguanosine(37) in tRNA + S-adenosyl-L-homocysteine + H(+). Its function is as follows. Specifically methylates guanosine-37 in various tRNAs. The sequence is that of tRNA (guanine-N(1)-)-methyltransferase from Tolumonas auensis (strain DSM 9187 / NBRC 110442 / TA 4).